A 164-amino-acid polypeptide reads, in one-letter code: UPF0114 protein KPK_0696 (164 aa).

4 helical membrane-spanning segments follow: residues 15–35, 53–73, 109–126, and 136–156; these read LLAPVYFGLSLGLVALTIKFF, LILTLLSLVDMTLVGGLLVMV, VAASIVAISSIHLLRVFM, and LMWYVIIHLTFVLSAFVMGYL.

This sequence belongs to the UPF0114 family.

It is found in the cell membrane. In Klebsiella pneumoniae (strain 342), this protein is UPF0114 protein KPK_0696.